The sequence spans 290 residues: NAD kinase (290 aa).

The active-site Proton acceptor is the D72. NAD(+) contacts are provided by residues 72–73 (DG), K77, 145–146 (NE), D175, 186–191 (TAYSLS), and A210.

Belongs to the NAD kinase family. It depends on a divalent metal cation as a cofactor.

The protein resides in the cytoplasm. The enzyme catalyses NAD(+) + ATP = ADP + NADP(+) + H(+). Functionally, involved in the regulation of the intracellular balance of NAD and NADP, and is a key enzyme in the biosynthesis of NADP. Catalyzes specifically the phosphorylation on 2'-hydroxyl of the adenosine moiety of NAD to yield NADP. This Bacteroides fragilis (strain YCH46) protein is NAD kinase.